The sequence spans 507 residues: Cytochrome P450 monooxygenase cloA (507 aa).

The helical transmembrane segment at 15-35 threads the bilayer; sequence WTWILLTTCIALTSPLVLKGI. The N-linked (GlcNAc...) asparagine glycan is linked to asparagine 247. Cysteine 450 serves as a coordination point for heme.

This sequence belongs to the cytochrome P450 family. Heme serves as cofactor.

It is found in the membrane. Its pathway is alkaloid biosynthesis; ergot alkaloid biosynthesis. Its function is as follows. Cytochrome P450 monooxygenase; part of the gene cluster that mediates the biosynthesis of fungal ergot alkaloid. DmaW catalyzes the first step of ergot alkaloid biosynthesis by condensing dimethylallyl diphosphate (DMAP) and tryptophan to form 4-dimethylallyl-L-tryptophan. The second step is catalyzed by the methyltransferase easF that methylates 4-dimethylallyl-L-tryptophan in the presence of S-adenosyl-L-methionine, resulting in the formation of 4-dimethylallyl-L-abrine. The catalase easC and the FAD-dependent oxidoreductase easE then transform 4-dimethylallyl-L-abrine to chanoclavine-I which is further oxidized by easD in the presence of NAD(+), resulting in the formation of chanoclavine-I aldehyde. Agroclavine dehydrogenase easG then mediates the conversion of chanoclavine-I aldehyde to agroclavine via a non-enzymatic adduct reaction: the substrate is an iminium intermediate that is formed spontaneously from chanoclavine-I aldehyde in the presence of glutathione. The presence of easA is not required to complete this reaction. Further conversion of agroclavine to paspalic acid is a two-step process involving oxidation of agroclavine to elymoclavine and of elymoclavine to paspalic acid, the second step being performed by the elymoclavine oxidase cloA. Paspalic acid is then further converted to D-lysergic acid. Ergopeptines are assembled from D-lysergic acid and three different amino acids by the D-lysergyl-peptide-synthetases composed each of a monomudular and a trimodular nonribosomal peptide synthetase subunit. LpsB and lpsC encode the monomodular subunits responsible for D-lysergic acid activation and incorporation into the ergopeptine backbone. LpsA1 and A2 subunits encode the trimodular nonribosomal peptide synthetase assembling the tripeptide portion of ergopeptines. LpsA1 is responsible for formation of the major ergopeptine, ergotamine, and lpsA2 for alpha-ergocryptine, the minor ergopeptine of the total alkaloid mixture elaborated by C.purpurea. D-lysergyl-tripeptides are assembled by the nonribosomal peptide synthetases and released as N-(D-lysergyl-aminoacyl)-lactams. Cyclolization of the D-lysergyl-tripeptides is performed by the Fe(2+)/2-ketoglutarate-dependent dioxygenase easH which introduces a hydroxyl group into N-(D-lysergyl-aminoacyl)-lactam at alpha-C of the aminoacyl residue followed by spontaneous condensation with the terminal lactam carbonyl group. The protein is Cytochrome P450 monooxygenase cloA of Claviceps purpurea (Ergot fungus).